The following is a 138-amino-acid chain: Proofreading thioesterase EntH (138 aa).

The Nucleophile or proton acceptor role is filled by Glu-64.

It belongs to the thioesterase PaaI family. In terms of assembly, homotetramer. Dimer of dimers. Interacts specifically with the aryl carrier protein (ArCP) domain of EntB.

The protein resides in the cytoplasm. Its pathway is siderophore biosynthesis; enterobactin biosynthesis. Required for optimal enterobactin synthesis. Acts as a proofreading enzyme that prevents EntB misacylation by hydrolyzing the thioester bound existing between EntB and wrongly charged molecules. This Citrobacter rodentium (strain ICC168) (Citrobacter freundii biotype 4280) protein is Proofreading thioesterase EntH.